The following is a 470-amino-acid chain: mRNA export factor ICP27 homolog (470 aa).

Disordered stretches follow at residues 1-31 (MALSSVSSCEPMEDEMSIMGSDTEDNFTGGD) and 73-202 (FSAS…AGDR). The span at 73–85 (FSASPQRAQPSNP) shows a compositional bias: polar residues. Basic residues-rich tracts occupy residues 94 to 107 (HGRRNRRRPFRRNN) and 178 to 187 (RVHRNRRRGN). Residues Cys-359, His-437, Cys-441, and Cys-446 each coordinate Zn(2+). The CHC2-type zinc finger occupies 359–446 (CYLSSSGSPT…HKRRCKADTC (88 aa)).

The protein belongs to the HHV-1 ICP27 protein family. Homodimer. Homodimerization is required for transactivation. Associates in a complex with RNA, and host export factors NXF1/TAP and ALYREF; these interactions allow nuclear export of viral transcripts. Interacts with three host shuttling SR proteins SRSF1, SRSF3 and SRSF7. Interacts with host SRPK1. Interacts with IE62; this interaction enhances IE62 transactivation.

Its subcellular location is the host cytoplasm. It is found in the host nucleus. Functionally, multifunctional regulator of the expression of viral genes that mediates nuclear export of viral intronless mRNAs. This immediate early (EI) protein promotes the nuclear export of viral intronless mRNAs by interacting with mRNAs and host NXF1/TAP. The polypeptide is mRNA export factor ICP27 homolog (Equine herpesvirus 1 (strain Kentucky A) (EHV-1)).